An 806-amino-acid chain; its full sequence is U3 small nucleolar RNA-associated protein 17 (806 aa).

WD repeat units lie at residues 266–305, 448–489, 499–538, and 598–635; these read WHAN…RQFL, RNGL…KTWV, GNLE…SAWK, and PHGG…VQWT.

As to quaternary structure, component of the ribosomal small subunit (SSU) processome.

It is found in the nucleus. Its subcellular location is the nucleolus. Functionally, involved in nucleolar processing of pre-18S ribosomal RNA. Required for optimal pre-ribosomal RNA transcription by RNA polymerase I together with a subset of U3 proteins required for transcription (t-UTPs). The protein is U3 small nucleolar RNA-associated protein 17 (utp17) of Schizosaccharomyces pombe (strain 972 / ATCC 24843) (Fission yeast).